The chain runs to 331 residues: Ketol-acid reductoisomerase (NADP(+)) (331 aa).

Residues 2-182 (ARMYYDEDAN…GGTRAGVLET (181 aa)) enclose the KARI N-terminal Rossmann domain. NADP(+) is bound by residues 25–28 (YGSQ), Ser-51, Ser-53, and 83–86 (DEVQ). His-108 is a catalytic residue. Residue Gly-134 participates in NADP(+) binding. Positions 183-328 (TFREETETDL…KDLRAMFSWL (146 aa)) constitute a KARI C-terminal knotted domain. Residues Asp-191, Glu-195, Glu-227, and Glu-231 each contribute to the Mg(2+) site. Ser-252 is a binding site for substrate.

The protein belongs to the ketol-acid reductoisomerase family. Mg(2+) serves as cofactor.

The catalysed reaction is (2R)-2,3-dihydroxy-3-methylbutanoate + NADP(+) = (2S)-2-acetolactate + NADPH + H(+). The enzyme catalyses (2R,3R)-2,3-dihydroxy-3-methylpentanoate + NADP(+) = (S)-2-ethyl-2-hydroxy-3-oxobutanoate + NADPH + H(+). Its pathway is amino-acid biosynthesis; L-isoleucine biosynthesis; L-isoleucine from 2-oxobutanoate: step 2/4. The protein operates within amino-acid biosynthesis; L-valine biosynthesis; L-valine from pyruvate: step 2/4. Its function is as follows. Involved in the biosynthesis of branched-chain amino acids (BCAA). Catalyzes an alkyl-migration followed by a ketol-acid reduction of (S)-2-acetolactate (S2AL) to yield (R)-2,3-dihydroxy-isovalerate. In the isomerase reaction, S2AL is rearranged via a Mg-dependent methyl migration to produce 3-hydroxy-3-methyl-2-ketobutyrate (HMKB). In the reductase reaction, this 2-ketoacid undergoes a metal-dependent reduction by NADPH to yield (R)-2,3-dihydroxy-isovalerate. The protein is Ketol-acid reductoisomerase (NADP(+)) of Nostoc punctiforme (strain ATCC 29133 / PCC 73102).